A 363-amino-acid chain; its full sequence is D-xylulose reductase (363 aa).

Positions 41, 66, and 159 each coordinate Zn(2+). 183–188 (GAGPVG) contacts NAD(+).

Belongs to the zinc-containing alcohol dehydrogenase family. The cofactor is Zn(2+).

The enzyme catalyses xylitol + NAD(+) = D-xylulose + NADH + H(+). Its pathway is carbohydrate degradation; L-arabinose degradation via L-arabinitol; D-xylulose 5-phosphate from L-arabinose (fungal route): step 4/5. This chain is D-xylulose reductase (XYL2), found in Scheffersomyces stipitis (strain ATCC 58785 / CBS 6054 / NBRC 10063 / NRRL Y-11545) (Yeast).